Here is a 228-residue protein sequence, read N- to C-terminus: MNKFFLAPSILSADFARLGEDIKKVIDAGSDLIHFDVMDNHYVPNLSMGPMILESLRNYNITAPIDVHLMVKPVDNLIPQFAKAGATFITFHPEATLHIERTLNLIKENGCKAGLAFNPATPLNFLDYILEKLDLILLMSVNPGFGNQSFLPSTFNKLREVRKIIDANFSDILLEVDGGVKLDNIADIACAGANVFVMGSGLFKYSNYKLVIEKIRKKLEYAHSRSIH.

Serine 9 provides a ligand contact to substrate. 4 residues coordinate a divalent metal cation: histidine 34, aspartate 36, histidine 68, and aspartate 177. The Proton acceptor role is filled by aspartate 36. Substrate contacts are provided by residues histidine 68, aspartate 177 to glycine 179, and glycine 199 to serine 200. Aspartate 177 (proton donor) is an active-site residue.

This sequence belongs to the ribulose-phosphate 3-epimerase family. The cofactor is a divalent metal cation.

The enzyme catalyses D-ribulose 5-phosphate = D-xylulose 5-phosphate. Its pathway is carbohydrate degradation. Catalyzes the reversible epimerization of D-ribulose 5-phosphate to D-xylulose 5-phosphate. The chain is Ribulose-phosphate 3-epimerase from Buchnera aphidicola subsp. Acyrthosiphon pisum (strain APS) (Acyrthosiphon pisum symbiotic bacterium).